The chain runs to 345 residues: MRVADFSFDLPDELIARYPMAQRNASRLLTLDGNSGALGDKQFTDLLGMINPGDLMVFNNTRVIPARMFGQKASGGKLEILVERMLDDKRILAHVRSSKSPKVDSLILLDGGYQMKMVARHDTLFELELLSELTILEVLEAVGHMPLPPYIDRPDEDADKERYQTVYNQNPGAVAAPTAGLHFDDAMLDALKAKGVNIAFVTLHVGAGTFQPVRVDTILEHKMHSEWANVPQDVVDLIAQTKAAGKRVVAVGTTSVRSLESAARASQGELKAFSGDTDIFIYPGYQFQVVDAMVTNFHLPESTLIMLVSAFAGFDHVMAAYQHAIAQKYRFFSYGDAMFVTKKAH.

It belongs to the QueA family. Monomer.

It localises to the cytoplasm. The catalysed reaction is 7-aminomethyl-7-carbaguanosine(34) in tRNA + S-adenosyl-L-methionine = epoxyqueuosine(34) in tRNA + adenine + L-methionine + 2 H(+). The protein operates within tRNA modification; tRNA-queuosine biosynthesis. Its function is as follows. Transfers and isomerizes the ribose moiety from AdoMet to the 7-aminomethyl group of 7-deazaguanine (preQ1-tRNA) to give epoxyqueuosine (oQ-tRNA). This Shewanella baltica (strain OS185) protein is S-adenosylmethionine:tRNA ribosyltransferase-isomerase.